The sequence spans 190 residues: Heme-binding protein 1 (190 aa).

Belongs to the HEBP family. Monomer. Ubiquitously expressed. Extremely abundant in liver.

It is found in the cytoplasm. Functionally, may bind free porphyrinogens that may be present in the cell and thus facilitate removal of these potentially toxic compound. Binds with a high affinity to one molecule of heme or porphyrins. It binds metalloporphyrins, free porphyrins and N-methylprotoporphyrin with similar affinities. In Mus musculus (Mouse), this protein is Heme-binding protein 1 (Hebp1).